Reading from the N-terminus, the 220-residue chain is MKKEKAVVVFSGGQDSTTCLFWAIEQFAEVEAVTFNYNQRHKLEIDCAAEIAKELGIKHTVLDMSLLNQLAPNALTRTDMEITHEEGELPSTFVDGRNLLFLSFAAVLAKQVGARHIVTGVCETDFSGYPDCRDVFVKSLNVTLNLSMDYPFVIHTPLMWIDKAETWKLSDELGAFEFVREKTLTCYNGIIGDGCGECPACQLRKAGLDTYLQEREGASN.

10–20 (FSGGQDSTTCL) contacts ATP. Zn(2+)-binding residues include Cys-186, Cys-195, Cys-198, and Cys-201.

It belongs to the QueC family. As to quaternary structure, homodimer. Zn(2+) is required as a cofactor.

The enzyme catalyses 7-carboxy-7-deazaguanine + NH4(+) + ATP = 7-cyano-7-deazaguanine + ADP + phosphate + H2O + H(+). Its pathway is purine metabolism; 7-cyano-7-deazaguanine biosynthesis. Catalyzes the ATP-dependent conversion of 7-carboxy-7-deazaguanine (CDG) to 7-cyano-7-deazaguanine (preQ(0)). This chain is 7-cyano-7-deazaguanine synthase, found in Bacillus thuringiensis (strain Al Hakam).